The chain runs to 77 residues: Acyl carrier protein (77 aa).

A Carrier domain is found at 2–77; the sequence is AEVFDRVKEI…DAVDYINSKA (76 aa). Ser-37 carries the O-(pantetheine 4'-phosphoryl)serine modification.

Belongs to the acyl carrier protein (ACP) family. In terms of processing, 4'-phosphopantetheine is transferred from CoA to a specific serine of apo-ACP by AcpS. This modification is essential for activity because fatty acids are bound in thioester linkage to the sulfhydryl of the prosthetic group.

It localises to the cytoplasm. It participates in lipid metabolism; fatty acid biosynthesis. Its function is as follows. Carrier of the growing fatty acid chain in fatty acid biosynthesis. The chain is Acyl carrier protein from Oceanobacillus iheyensis (strain DSM 14371 / CIP 107618 / JCM 11309 / KCTC 3954 / HTE831).